A 53-amino-acid polypeptide reads, in one-letter code: MAVPKKRTSISKKIIRNTLWKKKGYFTALKAFSLAQSLFTGNSKSFFCNKYKR.

Belongs to the bacterial ribosomal protein bL32 family.

It is found in the plastid. Its subcellular location is the chloroplast. The sequence is that of Large ribosomal subunit protein bL32c from Phaseolus vulgaris (Kidney bean).